A 252-amino-acid polypeptide reads, in one-letter code: Clc-like protein 2 (252 aa).

4 consecutive transmembrane segments (helical) span residues 7–29 (YAIL…TPAW), 91–111 (LFHI…SFCV), 127–147 (VFLV…AVYS), and 173–193 (IALT…VHVL).

It belongs to the Clc family.

The protein resides in the membrane. The chain is Clc-like protein 2 (clc-2) from Caenorhabditis elegans.